Reading from the N-terminus, the 589-residue chain is Probable translation initiation factor IF-2 (589 aa).

Positions 14–231 (LRQPIVCVLG…GLAQRFLESE (218 aa)) constitute a tr-type G domain. Residues 23–30 (GHVDHGKT) form a G1 region. 23–30 (GHVDHGKT) contacts GTP. Positions 48-52 (GITQR) are G2. Positions 84-87 (DTPG) are G3. GTP is bound by residues 84-88 (DTPGH) and 138-141 (NKID). The tract at residues 138–141 (NKID) is G4. The tract at residues 206–208 (SAK) is G5.

The protein belongs to the TRAFAC class translation factor GTPase superfamily. Classic translation factor GTPase family. IF-2 subfamily.

Functionally, function in general translation initiation by promoting the binding of the formylmethionine-tRNA to ribosomes. Seems to function along with eIF-2. The polypeptide is Probable translation initiation factor IF-2 (Thermoplasma volcanium (strain ATCC 51530 / DSM 4299 / JCM 9571 / NBRC 15438 / GSS1)).